A 90-amino-acid chain; its full sequence is uncharacterized protein (90 aa).

Positions 1-18 are cleaved as a signal peptide; it reads MSRALFAVVLAFPLIALA.

This is an uncharacterized protein from Escherichia coli (strain K12).